A 157-amino-acid chain; its full sequence is Small ribosomal subunit protein uS7 (157 aa).

It belongs to the universal ribosomal protein uS7 family. In terms of assembly, part of the 30S ribosomal subunit. Contacts proteins S9 and S11.

Its function is as follows. One of the primary rRNA binding proteins, it binds directly to 16S rRNA where it nucleates assembly of the head domain of the 30S subunit. Is located at the subunit interface close to the decoding center, probably blocks exit of the E-site tRNA. This is Small ribosomal subunit protein uS7 from Hydrogenovibrio crunogenus (strain DSM 25203 / XCL-2) (Thiomicrospira crunogena).